Consider the following 425-residue polypeptide: Enolase (425 aa).

Residue Q163 participates in (2R)-2-phosphoglycerate binding. Residue E205 is the Proton donor of the active site. Residues D242, E285, and D312 each contribute to the Mg(2+) site. The (2R)-2-phosphoglycerate site is built by K337, R366, S367, and K388. K337 functions as the Proton acceptor in the catalytic mechanism.

Belongs to the enolase family. The cofactor is Mg(2+).

The protein localises to the cytoplasm. The protein resides in the secreted. It localises to the cell surface. It catalyses the reaction (2R)-2-phosphoglycerate = phosphoenolpyruvate + H2O. It participates in carbohydrate degradation; glycolysis; pyruvate from D-glyceraldehyde 3-phosphate: step 4/5. Catalyzes the reversible conversion of 2-phosphoglycerate (2-PG) into phosphoenolpyruvate (PEP). It is essential for the degradation of carbohydrates via glycolysis. This Syntrophomonas wolfei subsp. wolfei (strain DSM 2245B / Goettingen) protein is Enolase.